An 80-amino-acid polypeptide reads, in one-letter code: Consomatin Mrc1 (80 aa).

A signal peptide spans 1–22 (MQTAYWVMVMMMVWITAPLSEG). Positions 23 to 57 (GKLNDVIRGLVPDDVTPQLILRSLISRRPSDSVVR) are excised as a propeptide. An intrachain disulfide couples Cys-63 to Cys-68. Trp-65 is subject to D-tryptophan. 4-hydroxyproline occurs at positions 69, 70, 71, and 72. Residues 74–80 (RRPNGKG) constitute a propeptide that is removed on maturation.

The protein belongs to the conotoxin C superfamily. Consomatin family. Expressed by the venom duct.

The protein resides in the secreted. Its function is as follows. Moderately activates human somatostatin receptors (SSTR) with a preferential activation of SSTR1 and SSTR4. In vivo, does not cause behavioral changes in mice within a few minutes of intracranial injection, but causes a progressive loss of movement thereafter. Four to five hours after injection, mice recover, even with the highest dose tested. Shows antinociception and antihyperalgesia activities in two mouse models of acute pain, most probably by acting outside the central nervous system. The chain is Consomatin Mrc1 from Conus mercator (Trader cone).